Consider the following 506-residue polypeptide: Sucrose transport protein SUT3 (506 aa).

At 1-20 (MAVDMELDGGGDGKGKAPPQ) the chain is on the cytoplasmic side. The helical transmembrane segment at 21-41 (ISLSGLFLACMVAGGVQYGWA) threads the bilayer. Over 42-54 (LQLSLLTPYIQTL) the chain is Extracellular. The chain crosses the membrane as a helical span at residues 55 to 75 (GIPHALTSVMWLCGPIAGLIV). Topologically, residues 76 to 94 (QPCVGLYSDKCTSSLGRRR) are cytoplasmic. Residues 95-115 (PFILTGCIIICISVIVIGFSS) traverse the membrane as a helical segment. At 116–135 (DIGYALGDATEDCKVYRGPR) the chain is on the extracellular side. The helical transmembrane segment at 136 to 156 (YHAAAAFILGFWLLDFSNNTV) threads the bilayer. At 157–171 (QGPARALMADLSGRH) the chain is on the cytoplasmic side. Residues 172-192 (GPSAANAIFCSWMALGNILGY) traverse the membrane as a helical segment. Residues 193–220 (SSGSTNDWHKWFPFLMTRACCEACANLK) lie on the Extracellular side of the membrane. The chain crosses the membrane as a helical span at residues 221-241 (AAFLVAVVFLGLSTAVTMVFA). The Cytoplasmic portion of the chain corresponds to 242–275 (REVALDPVAAAKRNEGEASGPLAVFKGMKNLPVG). Residues 276–296 (MPSVLIVTGLTWLSWFPFILF) form a helical membrane-spanning segment. Over 297-327 (DTDWMGREIYHGRPDGSPAEVTAFQEGVRQG) the chain is Extracellular. A helical membrane pass occupies residues 328–348 (AFGLLLNSIVLGISSFLIEPM). The Cytoplasmic segment spans residues 349-355 (CRRLGAR). A helical membrane pass occupies residues 356–376 (AVWVMSSAVVCVAMAAVSVLS). At 377–404 (AWSLGDFGGSVQDAARAPAEEGGVRASA) the chain is on the extracellular side. The chain crosses the membrane as a helical span at residues 405–425 (LALFVFLGLPFAVLCSVPFAV). The Cytoplasmic portion of the chain corresponds to 426-441 (TAQLTASRGGGQGLCT). Residues 442–462 (GVLNISIVVPQMAIALGAGPW) traverse the membrane as a helical segment. Residues 463 to 470 (DELFGEGN) lie on the Extracellular side of the membrane. The chain crosses the membrane as a helical span at residues 471–491 (IPAFAMASVFAAAAAAAGVVL). At 492-506 (LPKVSVRSVSMAGGH) the chain is on the cytoplasmic side.

It belongs to the glycoside-pentoside-hexuronide (GPH) cation symporter transporter (TC 2.A.2.4) family. In terms of assembly, homodimer.

Its subcellular location is the cell membrane. It participates in glycan biosynthesis; sucrose metabolism. In terms of biological role, responsible for the transport of sucrose into the cell, with the concomitant uptake of protons (symport system). May also transport other glucosides. This is Sucrose transport protein SUT3 (SUT3) from Oryza sativa subsp. indica (Rice).